The following is a 565-amino-acid chain: 2-(3-amino-3-carboxypropyl)histidine synthase subunit 2 (565 aa).

[4Fe-4S] cluster-binding residues include cysteine 139, cysteine 160, and cysteine 377. 2 disordered regions span residues 424-458 (QPAEEAQTADHEESPNDDDDMSEPESAPPEFDLRT) and 464-483 (HTRPMRNPAPRVSAQSDDAV).

This sequence belongs to the DPH1/DPH2 family. DPH2 subfamily. As to quaternary structure, component of the 2-(3-amino-3-carboxypropyl)histidine synthase complex composed of dph1, dph2, dph3 and a NADH-dependent reductase, predominantly cbr1. [4Fe-4S] cluster is required as a cofactor.

It is found in the cytoplasm. Its pathway is protein modification; peptidyl-diphthamide biosynthesis. Required for the first step of diphthamide biosynthesis, a post-translational modification of histidine which occurs in elongation factor 2. Dph1 and dph2 transfer a 3-amino-3-carboxypropyl (ACP) group from S-adenosyl-L-methionine (SAM) to a histidine residue, the reaction is assisted by a reduction system comprising dph3 and a NADH-dependent reductase, predominantly cbr1. Facilitates the reduction of the catalytic iron-sulfur cluster found in the dph1 subunit. In Aspergillus fumigatus (strain ATCC MYA-4609 / CBS 101355 / FGSC A1100 / Af293) (Neosartorya fumigata), this protein is 2-(3-amino-3-carboxypropyl)histidine synthase subunit 2 (dph2).